The sequence spans 496 residues: Cytochrome P450 71D181 (496 aa).

Residues methionine 1–methionine 21 form a helical; Signal-anchor for type II membrane protein membrane-spanning segment. A heme-binding site is contributed by cysteine 435. The interval methionine 471 to serine 496 is disordered.

It belongs to the cytochrome P450 family. Heme is required as a cofactor.

Its subcellular location is the membrane. The enzyme catalyses gamma-terpinene + 2 reduced [NADPH--hemoprotein reductase] + 2 O2 = carvacrol + 2 oxidized [NADPH--hemoprotein reductase] + 3 H2O + 2 H(+). The catalysed reaction is (4S)-limonene + reduced [NADPH--hemoprotein reductase] + O2 = (1S,5R)-carveol + oxidized [NADPH--hemoprotein reductase] + H2O + H(+). It carries out the reaction (4R)-limonene + reduced [NADPH--hemoprotein reductase] + O2 = (1R,5S)-carveol + oxidized [NADPH--hemoprotein reductase] + H2O + H(+). It catalyses the reaction alpha-terpinene + 2 reduced [NADPH--hemoprotein reductase] + 2 O2 = carvacrol + 2 oxidized [NADPH--hemoprotein reductase] + 3 H2O + 2 H(+). The protein operates within secondary metabolite biosynthesis; terpenoid biosynthesis. Involved in the biosynthesis of phenolic monoterpenes natural products thymol and carvacrol which have a broad range of biological activities acting as antimicrobial compounds, insecticides, antioxidants and pharmaceutical agents. Catalyzes the C2-hydroxylation of gamma-terpinene and alpha-terpinene to produce carvacrol. Also mediates the C6-hydroxylation of (4S)-limonene and (4R)-limonene to form carveol. The chain is Cytochrome P450 71D181 from Thymus vulgaris (Thyme).